Consider the following 285-residue polypeptide: GTP cyclohydrolase 1 type 2 homolog (285 aa).

5 residues coordinate a divalent metal cation: His-65, His-66, Asp-104, His-230, and Glu-234.

This sequence belongs to the GTP cyclohydrolase I type 2/NIF3 family. Homohexamer.

The polypeptide is GTP cyclohydrolase 1 type 2 homolog (Streptomyces coelicolor (strain ATCC BAA-471 / A3(2) / M145)).